The sequence spans 381 residues: Molybdenum import ATP-binding protein ModC (381 aa).

In terms of domain architecture, ABC transporter spans 5–238; the sequence is SRSIQAQFRG…PALPLAASRD (234 aa). 37-44 serves as a coordination point for ATP; that stretch reads GPSGCGKS. The region spanning 297-367 is the Mop domain; that stretch reads NTSILNVLPA…VKGVALAPGR (71 aa).

Belongs to the ABC transporter superfamily. Molybdate importer (TC 3.A.1.8) family. The complex is composed of two ATP-binding proteins (ModC), two transmembrane proteins (ModB) and a solute-binding protein (ModA).

The protein localises to the cell inner membrane. The catalysed reaction is molybdate(out) + ATP + H2O = molybdate(in) + ADP + phosphate + H(+). In terms of biological role, part of the ABC transporter complex ModABC involved in molybdenum import. Responsible for energy coupling to the transport system. The polypeptide is Molybdenum import ATP-binding protein ModC (Rhodopseudomonas palustris (strain BisB18)).